We begin with the raw amino-acid sequence, 117 residues long: Immunoglobulin lambda variable 1-47 (117 aa).

The signal sequence occupies residues 1 to 19 (MAGFPLLLTLLTHCAGSWA). A Pyrrolidone carboxylic acid modification is found at Q20. The framework-1 stretch occupies residues 20 to 44 (QSVLTQPPSASGTPGQRVTISCSGS). An Ig-like domain is found at 20–117 (QSVLTQPPSA…CAAWDDSLSG (98 aa)). C41 and C108 are disulfide-bonded. A complementarity-determining-1 region spans residues 45–52 (SSNIGSNY). Residues 53 to 69 (VYWYQQLPGTAPKLLIY) form a framework-2 region. The segment at 70–72 (SNN) is complementarity-determining-2. The interval 73-108 (QRPSGVPDRFSGSKSGTSASLAISGLRSEDEADYYC) is framework-3. A complementarity-determining-3 region spans residues 109–117 (AAWDDSLSG).

Immunoglobulins are composed of two identical heavy chains and two identical light chains; disulfide-linked.

The protein localises to the secreted. The protein resides in the cell membrane. Functionally, v region of the variable domain of immunoglobulin light chains that participates in the antigen recognition. Immunoglobulins, also known as antibodies, are membrane-bound or secreted glycoproteins produced by B lymphocytes. In the recognition phase of humoral immunity, the membrane-bound immunoglobulins serve as receptors which, upon binding of a specific antigen, trigger the clonal expansion and differentiation of B lymphocytes into immunoglobulins-secreting plasma cells. Secreted immunoglobulins mediate the effector phase of humoral immunity, which results in the elimination of bound antigens. The antigen binding site is formed by the variable domain of one heavy chain, together with that of its associated light chain. Thus, each immunoglobulin has two antigen binding sites with remarkable affinity for a particular antigen. The variable domains are assembled by a process called V-(D)-J rearrangement and can then be subjected to somatic hypermutations which, after exposure to antigen and selection, allow affinity maturation for a particular antigen. The chain is Immunoglobulin lambda variable 1-47 from Homo sapiens (Human).